The following is a 75-amino-acid chain: uncharacterized protein (75 aa).

The helical transmembrane segment at 7 to 26 (ATAPLFVIVGLAVVLTGATG) threads the bilayer.

It localises to the membrane. This is an uncharacterized protein from Dictyostelium discoideum (Social amoeba).